We begin with the raw amino-acid sequence, 142 residues long: MSTESTEERILAALEEDAQASYAAIAERADVSKPTVRKYIDQLESDGVIVGYSADVDPKKLSGQSIAMVGIDVASEQYVEATRTLQELDSVQALYSSSGDHMLMAEVRAADGDALGDVISDEVLAIDGVTAAHPSFLQERLK.

An HTH asnC-type domain is found at 1-72 (MSTESTEERI…GQSIAMVGID (72 aa)). The segment at residues 22–41 (YAAIAERADVSKPTVRKYID) is a DNA-binding region (H-T-H motif).

Functionally, transcription factor that regulates genes involved in amino acid metabolism. Represses the aspB3 gene, coding for an aspartate transaminase, in the presence of L-aspartate. Another target gene is the basal transcriptional regulator tfbB. Also binds its own promoter. This Halobacterium salinarum (strain ATCC 29341 / DSM 671 / R1) protein is HTH-type transcriptional regulator LrpA1 (lrpA1).